Here is a 259-residue protein sequence, read N- to C-terminus: Global transcriptional regulator CodY (259 aa).

Positions 1 to 155 are GAF domain; it reads MELLAKTRKL…SSTVVGMEIL (155 aa). Positions 203–222 form a DNA-binding region, H-T-H motif; the sequence is ASKIADRVGITRSVIVNALR. Position 215 is a phosphoserine (Ser215).

Belongs to the CodY family.

It is found in the cytoplasm. Its function is as follows. DNA-binding global transcriptional regulator which is involved in the adaptive response to starvation and acts by directly or indirectly controlling the expression of numerous genes in response to nutrient availability. During rapid exponential growth, CodY is highly active and represses genes whose products allow adaptation to nutrient depletion. The sequence is that of Global transcriptional regulator CodY from Bacillus cereus (strain B4264).